The chain runs to 298 residues: MAITAQMVKELRESTGAGMMDAKKALTETDGDMEAAVDWLRTKGLAKAAKKAGRTAAEGLVGVCVDGGTGVAVEVNSETDFVAKNADFQSMVTGFTKAALTVDDIEALKAADMGGKTVETTLQETIAVIGENMTLRRMAKISGDSVAAYVHNAAADGLGKIGVLVAVKGADNGIAKQVAMHIAATNPMALSEADLDPTVVERERTVQTQKALEENAASAKPKPDAVIENNIIPGRMKKFLEENTLLGQKFVINPDLTVAEAAKQAGVEIVGFVRMAVGEGIEKEKEDFAAEVAKTLAG.

Residues 79–82 (TDFV) are involved in Mg(2+) ion dislocation from EF-Tu.

It belongs to the EF-Ts family.

It is found in the cytoplasm. Associates with the EF-Tu.GDP complex and induces the exchange of GDP to GTP. It remains bound to the aminoacyl-tRNA.EF-Tu.GTP complex up to the GTP hydrolysis stage on the ribosome. This is Elongation factor Ts from Cereibacter sphaeroides (strain ATCC 17029 / ATH 2.4.9) (Rhodobacter sphaeroides).